We begin with the raw amino-acid sequence, 434 residues long: Alpha-enolase (434 aa).

N-acetylserine is present on Ser2. Lys5 is subject to N6-acetyllysine. Residue Ser40 coordinates Mg(2+). Tyr44 is subject to Phosphotyrosine. Lys60 is modified (N6-acetyllysine; alternate). Lys60 is modified (N6-succinyllysine; alternate). 2 positions are modified to N6-acetyllysine: Lys64 and Lys71. Lys89 is modified (N6-acetyllysine; alternate). Lys89 is modified (N6-succinyllysine; alternate). Lys126 carries the post-translational modification N6-acetyllysine. Positions 158 and 167 each coordinate substrate. N6-acetyllysine occurs at positions 193 and 199. At Lys202 the chain carries N6-acetyllysine; alternate. Lys202 participates in a covalent cross-link: Glycyl lysine isopeptide (Lys-Gly) (interchain with G-Cter in SUMO2); alternate. The Proton donor role is filled by Glu210. N6-acetyllysine; alternate is present on residues Lys228 and Lys233. N6-succinyllysine; alternate is present on Lys228. Lys228 bears the N6-(2-hydroxyisobutyryl)lysine; alternate mark. Lys233 bears the N6-malonyllysine; alternate mark. Asp245 is a Mg(2+) binding site. Position 256 is an N6-acetyllysine (Lys256). Position 263 is a phosphoserine (Ser263). Lys281 carries the post-translational modification N6-acetyllysine; alternate. N6-(2-hydroxyisobutyryl)lysine; alternate is present on Lys281. At Lys285 the chain carries N6-acetyllysine. Tyr287 bears the Phosphotyrosine mark. The residue at position 291 (Ser291) is a Phosphoserine. Mg(2+)-binding residues include Glu293 and Asp318. Glu293 and Asp318 together coordinate substrate. An N6-acetyllysine mark is found at Lys335 and Lys343. Catalysis depends on Lys343, which acts as the Proton acceptor. Residues 370–373 (SHRS) and Lys394 each bind substrate. Residues 405–434 (AKYNQILRIEEELGSKAKFAGRSFRNPLAK) are required for interaction with PLG. The residue at position 406 (Lys406) is an N6-acetyllysine. Position 420 is an N6-acetyllysine; alternate (Lys420). Lys420 is modified (N6-succinyllysine; alternate). Position 420 is an N6-malonyllysine; alternate (Lys420).

Belongs to the enolase family. As to quaternary structure, mammalian enolase is composed of 3 isozyme subunits, alpha, beta and gamma, which can form homodimers or heterodimers which are cell-type and development-specific. ENO1 interacts with PLG in the neuronal plasma membrane and promotes its activation. The C-terminal lysine is required for this binding. Interacts with ENO4 and PGAM2. Interacts with CMTM6. The cofactor is Mg(2+). ISGylated. In terms of processing, lysine 2-hydroxyisobutyrylation (Khib) by p300/EP300 activates the phosphopyruvate hydratase activity. As to expression, expressed in flagella of epididymal sperm. The alpha/alpha homodimer is expressed in embryo and in most adult tissues. The alpha/beta heterodimer and the beta/beta homodimer are found in striated muscle, and the alpha/gamma heterodimer and the gamma/gamma homodimer in neurons.

It is found in the cytoplasm. The protein localises to the cell membrane. It catalyses the reaction (2R)-2-phosphoglycerate = phosphoenolpyruvate + H2O. Its pathway is carbohydrate degradation; glycolysis; pyruvate from D-glyceraldehyde 3-phosphate: step 4/5. Functionally, glycolytic enzyme that catalyzes the conversion of 2-phosphoglycerate to phosphoenolpyruvate. In addition to glycolysis, involved in various processes such as growth control, hypoxia tolerance and allergic responses. May also function in the intravascular and pericellular fibrinolytic system due to its ability to serve as a receptor and activator of plasminogen on the cell surface of several cell-types such as leukocytes and neurons. Stimulates immunoglobulin production. This chain is Alpha-enolase (Eno1), found in Rattus norvegicus (Rat).